We begin with the raw amino-acid sequence, 648 residues long: Beta-glucuronidase (648 aa).

The signal sequence occupies residues 1–22 (MSLKWSACWVALGQLLCSCALA). N-linked (GlcNAc...) asparagine glycosylation is found at Asn172 and Asn416. Glu447 (proton donor) is an active-site residue. Asn627 is a glycosylation site (N-linked (GlcNAc...) asparagine).

Belongs to the glycosyl hydrolase 2 family. Homotetramer.

It localises to the lysosome. The protein localises to the endoplasmic reticulum. It catalyses the reaction a beta-D-glucuronoside + H2O = D-glucuronate + an alcohol. Inhibited by L-aspartic acid. Plays an important role in the degradation of dermatan and keratan sulfates. The protein is Beta-glucuronidase (Gusb) of Mus musculus (Mouse).